The sequence spans 308 residues: 3'(2'),5'-bisphosphate nucleotidase 1 (308 aa).

Ala-2 bears the N-acetylalanine mark. Asp-51 functions as the Proton acceptor in the catalytic mechanism. Residues Glu-74, Asp-117, Val-119, and Asp-120 each coordinate Mg(2+). Catalysis depends on Thr-122, which acts as the Proton acceptor. Residue Thr-122 is modified to Phosphothreonine. 4 residues coordinate AMP: Thr-195, His-198, Gly-220, and Lys-224. Ser-240 bears the Phosphoserine mark. Residue Lys-244 is modified to N6-succinyllysine. Position 247 (Asp-247) interacts with Mg(2+).

Belongs to the inositol monophosphatase superfamily. It depends on Mg(2+) as a cofactor. As to expression, highly expressed in heart, brain, spleen, lung, liver, skeletal muscle, kidney and testis.

It catalyses the reaction adenosine 3',5'-bisphosphate + H2O = AMP + phosphate. The catalysed reaction is adenosine 2',5'-bisphosphate + H2O = AMP + phosphate. The enzyme catalyses 3'-phosphoadenylyl sulfate + H2O = adenosine 5'-phosphosulfate + phosphate. It carries out the reaction 1D-myo-inositol 1,4-bisphosphate + H2O = 1D-myo-inositol 4-phosphate + phosphate. It catalyses the reaction 1D-myo-inositol 1,3,4-trisphosphate + H2O = 1D-myo-inositol 3,4-bisphosphate + phosphate. Its activity is regulated as follows. Inhibited by Li(+) and Ca(2+), but not by Na(+). In terms of biological role, phosphatase that converts 3'(2')-phosphoadenosine 5'-phosphate (PAP) to AMP and adenosine 3'-phosphate 5'-phosphosulfate (PAPS) to adenosine 5'-phosphosulfate (APS). Is also able to hydrolyze inositol 1,4-bisphosphate (Ins(1,4)P2) and inositol 1,3,4-trisphosphate (Ins(1,3,4)P3), but is not active on AMP, 3'-AMP, fructose-1,6-bisphosphate, Ins(1)P, Ins(2)P and Ins(1,4,5)P3. Probably prevents the toxic accumulation of PAP, a compound which inhibits a variety of proteins, including PAPS-utilizing enzymes such as sulfotransferases, and RNA processing enzymes. Could also play a role in inositol recycling and phosphoinositide metabolism. This chain is 3'(2'),5'-bisphosphate nucleotidase 1 (Bpnt1), found in Rattus norvegicus (Rat).